The primary structure comprises 160 residues: Serine-protein kinase RsbW (160 aa).

It belongs to the anti-sigma-factor family.

The catalysed reaction is L-seryl-[protein] + ATP = O-phospho-L-seryl-[protein] + ADP + H(+). It carries out the reaction L-threonyl-[protein] + ATP = O-phospho-L-threonyl-[protein] + ADP + H(+). Functionally, negative regulator of sigma-B activity. Phosphorylates and inactivates its specific antagonist protein, RsbV. Upon phosphorylation of RsbV, RsbW is released and binds to sigma-B, thereby blocking its ability to form an RNA polymerase holoenzyme (E-sigma-B). In Bacillus anthracis (strain A0248), this protein is Serine-protein kinase RsbW.